The chain runs to 451 residues: NAC domain containing protein 52 (451 aa).

The tract at residues 1–21 (MGRESVAVVTAPPSATAPGTA) is disordered. One can recognise an NAC domain in the interval 27 to 178 (LAPGFRFHPT…AYVLCRVFHK (152 aa)). A DNA-binding region spans residues 126–184 (LGMKKTLVFHSGRAPDGLRTNWVMHEYRLVEYETEKNGNLVQDAYVLCRVFHKNNIGPP). Disordered stretches follow at residues 255–337 (DQQN…TTTT) and 370–400 (KKEK…KVND). Over residues 256–270 (QQNHHENDLKPEEHN) the composition is skewed to basic and acidic residues. Residues 272 to 292 (NNNYDENEETLKREQMEEEER) are a coiled coil. The segment covering 318-337 (ESNNNSSRNTQDHCSSTTTT) has biased composition (low complexity). Basic and acidic residues predominate over residues 370–384 (KKEKPQQPLRPHKEP). A coiled-coil region spans residues 398-446 (VNDLQKEIHQMSVERETFKLEMMSAEAMISILQSRIDALRQENEELKKN).

As to quaternary structure, interacts with JMJ14 and NAC050. In terms of tissue distribution, mostly expressed in floral organs, and, at low levels, in other organs.

It is found in the nucleus. Transcriptional repressor that binds to the motif 5'-(C/T)A(C/A)G-3' in the promoter of target genes. Also binds to the 5'-CTTGNNNNNCAAG-3' consensus sequence in chromatin. Can bind to the mitochondrial dysfunction motif (MDM) present in the upstream regions of mitochondrial dysfunction stimulon (MDS) genes involved in mitochondrial retrograde regulation (MRR). Together with NAC050 and JMJ14, regulates gene expression and flowering time by associating with the histone demethylase JMJ14, probably by the promotion of RNA-mediated gene silencing. Regulates siRNA-dependent post-transcriptional gene silencing (PTGS) through SGS3 expression modulation. Required during pollen development. This Arabidopsis thaliana (Mouse-ear cress) protein is NAC domain containing protein 52.